Here is a 247-residue protein sequence, read N- to C-terminus: Ribosomal RNA small subunit methyltransferase J (247 aa).

Residues 101–102 (RD), 117–118 (ER), 153–154 (SS), and Asp-171 contribute to the S-adenosyl-L-methionine site.

It belongs to the methyltransferase superfamily. RsmJ family.

The protein localises to the cytoplasm. It catalyses the reaction guanosine(1516) in 16S rRNA + S-adenosyl-L-methionine = N(2)-methylguanosine(1516) in 16S rRNA + S-adenosyl-L-homocysteine + H(+). Specifically methylates the guanosine in position 1516 of 16S rRNA. This chain is Ribosomal RNA small subunit methyltransferase J, found in Photorhabdus laumondii subsp. laumondii (strain DSM 15139 / CIP 105565 / TT01) (Photorhabdus luminescens subsp. laumondii).